A 201-amino-acid chain; its full sequence is Molybdenum cofactor guanylyltransferase (201 aa).

Residues 14–16 (LAG), K31, and D104 each bind GTP. D104 contributes to the Mg(2+) binding site.

The protein belongs to the MobA family. In terms of assembly, monomer. Mg(2+) is required as a cofactor.

It is found in the cytoplasm. It catalyses the reaction Mo-molybdopterin + GTP + H(+) = Mo-molybdopterin guanine dinucleotide + diphosphate. Its function is as follows. Transfers a GMP moiety from GTP to Mo-molybdopterin (Mo-MPT) cofactor (Moco or molybdenum cofactor) to form Mo-molybdopterin guanine dinucleotide (Mo-MGD) cofactor. The sequence is that of Molybdenum cofactor guanylyltransferase from Helicobacter pylori (strain ATCC 700392 / 26695) (Campylobacter pylori).